Consider the following 402-residue polypeptide: Pentalenic acid synthase (402 aa).

Residues 1 to 28 (MTEPGTSVSAPVAFPQDRTCPYDPPTAY) are disordered. Cys351 contributes to the heme binding site.

Belongs to the cytochrome P450 family. Heme serves as cofactor.

The enzyme catalyses 1-deoxypentalenate + reduced 2[4Fe-4S]-[ferredoxin] + O2 + 2 H(+) = pentalenate + oxidized 2[4Fe-4S]-[ferredoxin] + H2O. It participates in antibiotic biosynthesis; neopentalenolactone biosynthesis. Its function is as follows. Catalyzes the conversion of 1-deoxypentalenic acid to pentalenic acid in the biosynthesis of neopentalenolactone antibiotic. The polypeptide is Pentalenic acid synthase (cyp28) (Streptomyces avermitilis (strain ATCC 31267 / DSM 46492 / JCM 5070 / NBRC 14893 / NCIMB 12804 / NRRL 8165 / MA-4680)).